The following is a 101-amino-acid chain: NADH-quinone oxidoreductase subunit K (101 aa).

3 consecutive transmembrane segments (helical) span residues 4 to 24, 30 to 50, and 61 to 81; these read LAHYLVLGAILFAISIVGIFL, IIILMAIELMLLAVNTNFVAF, and IFVFFVLTVAAAEAAIGLAIL.

The protein belongs to the complex I subunit 4L family. In terms of assembly, NDH-1 is composed of 14 different subunits. Subunits NuoA, H, J, K, L, M, N constitute the membrane sector of the complex.

Its subcellular location is the cell inner membrane. It catalyses the reaction a quinone + NADH + 5 H(+)(in) = a quinol + NAD(+) + 4 H(+)(out). Functionally, NDH-1 shuttles electrons from NADH, via FMN and iron-sulfur (Fe-S) centers, to quinones in the respiratory chain. The immediate electron acceptor for the enzyme in this species is believed to be ubiquinone. Couples the redox reaction to proton translocation (for every two electrons transferred, four hydrogen ions are translocated across the cytoplasmic membrane), and thus conserves the redox energy in a proton gradient. This is NADH-quinone oxidoreductase subunit K from Paraburkholderia phymatum (strain DSM 17167 / CIP 108236 / LMG 21445 / STM815) (Burkholderia phymatum).